Here is an 84-residue protein sequence, read N- to C-terminus: Exodeoxyribonuclease 7 small subunit (84 aa).

This sequence belongs to the XseB family. As to quaternary structure, heterooligomer composed of large and small subunits.

The protein localises to the cytoplasm. It carries out the reaction Exonucleolytic cleavage in either 5'- to 3'- or 3'- to 5'-direction to yield nucleoside 5'-phosphates.. Bidirectionally degrades single-stranded DNA into large acid-insoluble oligonucleotides, which are then degraded further into small acid-soluble oligonucleotides. This is Exodeoxyribonuclease 7 small subunit from Yersinia pseudotuberculosis serotype O:1b (strain IP 31758).